A 316-amino-acid polypeptide reads, in one-letter code: tRNA methyltransferase 10 homolog B (316 aa).

A coiled-coil region spans residues 73–98 (EKIVAAKKSKRKQEKERRKANRVENS). Residues 77 to 96 (AAKKSKRKQEKERRKANRVE) are disordered. The SAM-dependent MTase TRM10-type domain maps to 113 to 310 (IKERLLEAKH…KGVSSRKGYV (198 aa)).

Belongs to the class IV-like SAM-binding methyltransferase superfamily. TRM10 family.

The catalysed reaction is guanosine(9) in tRNA + S-adenosyl-L-methionine = N(1)-methylguanosine(9) in tRNA + S-adenosyl-L-homocysteine + H(+). In terms of biological role, S-adenosyl-L-methionine-dependent guanine N(1)-methyltransferase that catalyzes the formation of N(1)-methylguanine at position 9 (m1G9) in tRNAs. Probably not able to catalyze formation of N(1)-methyladenine at position 9 (m1A9) in tRNAs. This Bos taurus (Bovine) protein is tRNA methyltransferase 10 homolog B (TRMT10B).